Reading from the N-terminus, the 368-residue chain is Glycolate oxidase 2 (368 aa).

The region spanning 1 to 360 is the FMN hydroxy acid dehydrogenase domain; it reads MALVTNVCEY…TRGHVVTESD (360 aa). Residues 78-80, serine 107, 128-130, and threonine 156 each bind FMN; these read PTA and QLS. Arginine 165 is a glyoxylate binding site. 2 residues coordinate FMN: lysine 231 and serine 253. Histidine 255 and arginine 258 together coordinate glyoxylate. The active-site Proton acceptor is the histidine 255. Residues 286–290 and 309–310 contribute to the FMN site; these read DSGFR and GR. The short motif at 366-368 is the Microbody targeting signal element; sequence SRL.

Belongs to the FMN-dependent alpha-hydroxy acid dehydrogenase family. As to quaternary structure, homotetramer. The cofactor is FMN.

The protein resides in the peroxisome. It catalyses the reaction glycolate + O2 = glyoxylate + H2O2. It functions in the pathway photosynthesis; photorespiration; glycine from 2-phosphoglycolate: step 2/3. Catalyzes the oxidation of glycolate to glyoxylate, with a reduction of O2 to H2O2. Is a key enzyme in photorespiration in green plants. The protein is Glycolate oxidase 2 (GLO2) of Oryza sativa subsp. indica (Rice).